The sequence spans 110 residues: Phosphoribosyl-AMP cyclohydrolase (110 aa).

Asp80 contacts Mg(2+). Residue Cys81 coordinates Zn(2+). Asp82 and Asp84 together coordinate Mg(2+). Cys97 and Cys104 together coordinate Zn(2+).

This sequence belongs to the PRA-CH family. Homodimer. Mg(2+) is required as a cofactor. Zn(2+) serves as cofactor.

The protein localises to the cytoplasm. It catalyses the reaction 1-(5-phospho-beta-D-ribosyl)-5'-AMP + H2O = 1-(5-phospho-beta-D-ribosyl)-5-[(5-phospho-beta-D-ribosylamino)methylideneamino]imidazole-4-carboxamide. Its pathway is amino-acid biosynthesis; L-histidine biosynthesis; L-histidine from 5-phospho-alpha-D-ribose 1-diphosphate: step 3/9. In terms of biological role, catalyzes the hydrolysis of the adenine ring of phosphoribosyl-AMP. The sequence is that of Phosphoribosyl-AMP cyclohydrolase from Clostridium botulinum (strain Okra / Type B1).